The primary structure comprises 369 residues: Type 2 DNA topoisomerase 6 subunit A (369 aa).

The Topo IIA-type catalytic domain maps to 11 to 149 (QRDLLAREKL…FHMRPEEDGA (139 aa)). The O-(5'-phospho-DNA)-tyrosine intermediate role is filled by Tyr106. Positions 202 and 254 each coordinate Mg(2+).

The protein belongs to the TOP6A family. Homodimer. Heterotetramer of two Top6A and two Top6B chains. It depends on Mg(2+) as a cofactor.

The enzyme catalyses ATP-dependent breakage, passage and rejoining of double-stranded DNA.. Its function is as follows. Relaxes both positive and negative superturns and exhibits a strong decatenase activity. In Methanosarcina barkeri (strain Fusaro / DSM 804), this protein is Type 2 DNA topoisomerase 6 subunit A.